The primary structure comprises 317 residues: Porphobilinogen deaminase (317 aa).

S-(dipyrrolylmethanemethyl)cysteine is present on Cys245.

The protein belongs to the HMBS family. In terms of assembly, monomer. It depends on dipyrromethane as a cofactor.

The catalysed reaction is 4 porphobilinogen + H2O = hydroxymethylbilane + 4 NH4(+). It functions in the pathway porphyrin-containing compound metabolism; protoporphyrin-IX biosynthesis; coproporphyrinogen-III from 5-aminolevulinate: step 2/4. It participates in porphyrin-containing compound metabolism; chlorophyll biosynthesis. Functionally, tetrapolymerization of the monopyrrole PBG into the hydroxymethylbilane pre-uroporphyrinogen in several discrete steps. This Prochlorococcus marinus (strain MIT 9313) protein is Porphobilinogen deaminase.